The primary structure comprises 362 residues: Glutaminase-asparaginase (362 aa).

The N-terminal stretch at 1–25 is a signal peptide; sequence MKPLLHAFAPGVMALMLLLPQAAQA. An Asparaginase/glutaminase domain is found at 35–362; the sequence is SNVVILATGG…KELQRIFWEY (328 aa). Threonine 45 acts as the Acyl-ester intermediate in catalysis. Substrate contacts are provided by residues serine 92 and 125-126; that span reads TD.

This sequence belongs to the asparaginase 1 family. As to quaternary structure, homotetramer.

It localises to the periplasm. The enzyme catalyses L-glutamine + H2O = L-glutamate + NH4(+). The catalysed reaction is L-asparagine + H2O = L-aspartate + NH4(+). The protein is Glutaminase-asparaginase (ansB) of Pseudomonas aeruginosa (strain ATCC 15692 / DSM 22644 / CIP 104116 / JCM 14847 / LMG 12228 / 1C / PRS 101 / PAO1).